The following is a 209-amino-acid chain: Pyridoxal 5'-phosphate synthase subunit PdxT (209 aa).

Position 58-60 (58-60) interacts with L-glutamine; that stretch reads GES. The active-site Nucleophile is Cys-90. Residues Arg-119 and 148–149 each bind L-glutamine; that span reads IR. Residues His-185 and Glu-187 each act as charge relay system in the active site.

The protein belongs to the glutaminase PdxT/SNO family. As to quaternary structure, in the presence of PdxS, forms a dodecamer of heterodimers. Only shows activity in the heterodimer.

The enzyme catalyses aldehydo-D-ribose 5-phosphate + D-glyceraldehyde 3-phosphate + L-glutamine = pyridoxal 5'-phosphate + L-glutamate + phosphate + 3 H2O + H(+). It carries out the reaction L-glutamine + H2O = L-glutamate + NH4(+). Its pathway is cofactor biosynthesis; pyridoxal 5'-phosphate biosynthesis. Functionally, catalyzes the hydrolysis of glutamine to glutamate and ammonia as part of the biosynthesis of pyridoxal 5'-phosphate. The resulting ammonia molecule is channeled to the active site of PdxS. The sequence is that of Pyridoxal 5'-phosphate synthase subunit PdxT from Clavibacter sepedonicus (Clavibacter michiganensis subsp. sepedonicus).